Consider the following 596-residue polypeptide: Alpha-1,3-galactosidase A (596 aa).

The signal sequence occupies residues 1-21 (MQNPVASLLFILAMLTGPCPA). The segment at 23-57 (DYPERTERTQSAGNHVWHIDPDKGNDGNPGTAPST) is disordered. PbH1 repeat units lie at residues 351–373 (RGKI…NVHG), 482–504 (RKPV…LVED), 515–537 (VRNM…QIVP), and 547–569 (HRNI…RIRH).

It belongs to the glycosyl hydrolase 110 family. A subfamily.

It carries out the reaction Hydrolysis of terminal, non-reducing branched (1-&gt;3)-alpha-D-galactosidic residues, producing free D-galactose.. The enzyme catalyses Hydrolysis of terminal, non-reducing alpha-D-galactose residues in alpha-D-galactosides, including galactose oligosaccharides, galactomannans and galactolipids.. Alpha-galactosidase that specifically removes branched alpha-1,3-linked galactose residues present in blood group B antigens. Has no activity toward linear alpha-1,3-linked galactose residues. This chain is Alpha-1,3-galactosidase A (glaA), found in Akkermansia muciniphila (strain ATCC BAA-835 / DSM 22959 / JCM 33894 / BCRC 81048 / CCUG 64013 / CIP 107961 / Muc).